A 339-amino-acid chain; its full sequence is Uroporphyrinogen decarboxylase (339 aa).

Residues 21–25 (RQAGR), aspartate 71, tyrosine 147, serine 202, and histidine 315 contribute to the substrate site.

It belongs to the uroporphyrinogen decarboxylase family. As to quaternary structure, homodimer.

The protein resides in the cytoplasm. The catalysed reaction is uroporphyrinogen III + 4 H(+) = coproporphyrinogen III + 4 CO2. It functions in the pathway porphyrin-containing compound metabolism; protoporphyrin-IX biosynthesis; coproporphyrinogen-III from 5-aminolevulinate: step 4/4. Catalyzes the decarboxylation of four acetate groups of uroporphyrinogen-III to yield coproporphyrinogen-III. The chain is Uroporphyrinogen decarboxylase from Helicobacter pylori (strain HPAG1).